Here is an 88-residue protein sequence, read N- to C-terminus: Small ribosomal subunit protein bS20 (88 aa).

It belongs to the bacterial ribosomal protein bS20 family.

In terms of biological role, binds directly to 16S ribosomal RNA. This is Small ribosomal subunit protein bS20 from Bradyrhizobium sp. (strain BTAi1 / ATCC BAA-1182).